Reading from the N-terminus, the 293-residue chain is MGSGKDRTLAGWTLPETKTDATAQFDRFVTENRFTIAVVFPLVGAVTLLASAEGLLPDPLAFNPYFVLFGTFVMRLPLVAGIFPLVDRRAGLALVALTLYSYGIELVGVRTGWPYGEFTYGVDLGPMLLGDVPFGLPVFFFPLVLNAYLLVLLLLGNRAASTTVRLLSTLATVMLVDLVLDPGAVAIGFWIYEMPQFYGVPWQNYAGWLLSGSVAVLLFDFGFDRAGLRRRLRDCPFMLDDLVSFVLLWGGINLFYTNWVPFGLAALLGAGLLWTDRFDFDLSETRLGRAVWR.

Helical transmembrane passes span 36 to 56 (IAVV…EGLL), 66 to 86 (FVLF…FPLV), 89 to 109 (RAGL…LVGV), 134 to 154 (FGLP…VLLL), 171 to 191 (ATVM…GFWI), 199 to 219 (GVPW…VLLF), and 254 to 274 (LFYT…GLLW).

Belongs to the BABR hydratase family.

The protein localises to the membrane. It carries out the reaction bacterioruberin = bisanhydrobacterioruberin + 2 H2O. It participates in carotenoid biosynthesis. Functionally, involved in the biosynthesis of the acyclic C50 carotenoid bacterioruberin (BR). Catalyzes the reaction that introduces hydroxyl groups to C3'' and C3''' of bisanhydrobacterioruberin (BABR) to generate BR. This chain is Bisanhydrobacterioruberin hydratase, found in Haloarcula japonica (strain ATCC 49778 / DSM 6131 / JCM 7785 / NBRC 101032 / NCIMB 13157 / TR-1).